The chain runs to 282 residues: 4-diphosphocytidyl-2-C-methyl-D-erythritol kinase (282 aa).

The active site involves lysine 9. Residue 98–108 participates in ATP binding; that stretch reads PMGGGLGGGSS. Aspartate 140 is an active-site residue.

This sequence belongs to the GHMP kinase family. IspE subfamily. In terms of assembly, homodimer.

The enzyme catalyses 4-CDP-2-C-methyl-D-erythritol + ATP = 4-CDP-2-C-methyl-D-erythritol 2-phosphate + ADP + H(+). It participates in isoprenoid biosynthesis; isopentenyl diphosphate biosynthesis via DXP pathway; isopentenyl diphosphate from 1-deoxy-D-xylulose 5-phosphate: step 3/6. Catalyzes the phosphorylation of the position 2 hydroxy group of 4-diphosphocytidyl-2C-methyl-D-erythritol. This chain is 4-diphosphocytidyl-2-C-methyl-D-erythritol kinase, found in Salmonella agona (strain SL483).